Reading from the N-terminus, the 200-residue chain is Superoxide dismutase [Mn], mitochondrial (200 aa).

Residues His27, His72, Asp157, and His161 each coordinate Mn(2+).

Belongs to the iron/manganese superoxide dismutase family. The cofactor is Mn(2+).

The protein resides in the mitochondrion matrix. It catalyses the reaction 2 superoxide + 2 H(+) = H2O2 + O2. Its function is as follows. Destroys superoxide anion radicals which are normally produced within the cells and which are toxic to biological systems. The polypeptide is Superoxide dismutase [Mn], mitochondrial (sod) (Agaricus bisporus (White button mushroom)).